The following is a 67-amino-acid chain: uncharacterized protein (67 aa).

This is an uncharacterized protein from Swinepox virus (strain Kasza) (SWPV).